Reading from the N-terminus, the 351-residue chain is Fe(3+) ions import ATP-binding protein FbpC (351 aa).

Residues 7–237 (VELKNVTKRF…PASEFMASFM (231 aa)) form the ABC transporter domain. ATP is bound at residue 39–46 (GPSGCGKT).

The protein belongs to the ABC transporter superfamily. Fe(3+) ion importer (TC 3.A.1.10) family. As to quaternary structure, the complex is composed of two ATP-binding proteins (FbpC), two transmembrane proteins (FbpB) and a solute-binding protein (FbpA).

The protein resides in the cell inner membrane. It carries out the reaction Fe(3+)(out) + ATP + H2O = Fe(3+)(in) + ADP + phosphate + H(+). In terms of biological role, part of the ABC transporter complex FbpABC involved in Fe(3+) ions import. Responsible for energy coupling to the transport system. This chain is Fe(3+) ions import ATP-binding protein FbpC, found in Photorhabdus laumondii subsp. laumondii (strain DSM 15139 / CIP 105565 / TT01) (Photorhabdus luminescens subsp. laumondii).